The following is a 252-amino-acid chain: tRNA (guanine-N(7)-)-methyltransferase (252 aa).

The S-adenosyl-L-methionine site is built by Glu-75, Glu-100, Asp-127, and Asp-150. Asp-150 is an active-site residue. Position 154 (Lys-154) interacts with substrate. Positions 156-161 (RHNKRR) are interaction with RNA. Substrate contacts are provided by residues Asp-186 and 223 to 226 (THFE).

Belongs to the class I-like SAM-binding methyltransferase superfamily. TrmB family.

It catalyses the reaction guanosine(46) in tRNA + S-adenosyl-L-methionine = N(7)-methylguanosine(46) in tRNA + S-adenosyl-L-homocysteine. Its pathway is tRNA modification; N(7)-methylguanine-tRNA biosynthesis. Catalyzes the formation of N(7)-methylguanine at position 46 (m7G46) in tRNA. The polypeptide is tRNA (guanine-N(7)-)-methyltransferase (Xanthomonas oryzae pv. oryzae (strain MAFF 311018)).